An 82-amino-acid chain; its full sequence is MVFLLCFFLVADVSYGINGDCELPKVVGPCRGGFRRYYYNSSSKRCEKFIYGGCRGNANNFHTLEECEKVCGVRSRDSPKEN.

The first 16 residues, 1 to 16 (MVFLLCFFLVADVSYG), serve as a signal peptide directing secretion. A BPTI/Kunitz inhibitor domain is found at 21–71 (CELPKVVGPCRGGFRRYYYNSSSKRCEKFIYGGCRGNANNFHTLEECEKVC). 3 cysteine pairs are disulfide-bonded: Cys21–Cys71, Cys30–Cys54, and Cys46–Cys67. Residues 76-82 (RDSPKEN) constitute a propeptide that is removed on maturation.

Belongs to the venom Kunitz-type family. Sea anemone type 2 potassium channel toxin subfamily.

The protein resides in the secreted. Its subcellular location is the nematocyst. In terms of biological role, serine protease inhibitor that inhibits both tissue and plasma kallikreins. Has hemolytic activity. Inhibits voltage-gated potassium channels (Kv). The sequence is that of U-actitoxin-Avd3m from Anemonia viridis (Snakelocks anemone).